Consider the following 373-residue polypeptide: Phosphoserine aminotransferase (373 aa).

L-glutamate is bound at residue Arg-47. Pyridoxal 5'-phosphate-binding positions include 81-82 (AR), Trp-113, Thr-164, Asp-185, and Gln-208. Lys-209 carries the N6-(pyridoxal phosphate)lysine modification. Residue 250–251 (NT) coordinates pyridoxal 5'-phosphate.

This sequence belongs to the class-V pyridoxal-phosphate-dependent aminotransferase family. SerC subfamily. Homodimer. The cofactor is pyridoxal 5'-phosphate.

The protein localises to the cytoplasm. The enzyme catalyses O-phospho-L-serine + 2-oxoglutarate = 3-phosphooxypyruvate + L-glutamate. It catalyses the reaction 4-(phosphooxy)-L-threonine + 2-oxoglutarate = (R)-3-hydroxy-2-oxo-4-phosphooxybutanoate + L-glutamate. It functions in the pathway amino-acid biosynthesis; L-serine biosynthesis; L-serine from 3-phospho-D-glycerate: step 2/3. It participates in cofactor biosynthesis; pyridoxine 5'-phosphate biosynthesis; pyridoxine 5'-phosphate from D-erythrose 4-phosphate: step 3/5. Catalyzes the reversible conversion of 3-phosphohydroxypyruvate to phosphoserine and of 3-hydroxy-2-oxo-4-phosphonooxybutanoate to phosphohydroxythreonine. This chain is Phosphoserine aminotransferase, found in Buchnera aphidicola subsp. Baizongia pistaciae (strain Bp).